Consider the following 279-residue polypeptide: Large ribosomal subunit protein uL2 (279 aa).

Residues 223–279 form a disordered region; sequence TVRGSAMNPNDHPHGGGEGRSPVGMDAPRTPWGKRHMGVKTRNNKKSSTSMIVRRRK. A compositionally biased stretch (basic residues) spans 254 to 267; that stretch reads WGKRHMGVKTRNNK.

It belongs to the universal ribosomal protein uL2 family. Part of the 50S ribosomal subunit. Forms a bridge to the 30S subunit in the 70S ribosome.

Its function is as follows. One of the primary rRNA binding proteins. Required for association of the 30S and 50S subunits to form the 70S ribosome, for tRNA binding and peptide bond formation. It has been suggested to have peptidyltransferase activity; this is somewhat controversial. Makes several contacts with the 16S rRNA in the 70S ribosome. In Ureaplasma parvum serovar 3 (strain ATCC 27815 / 27 / NCTC 11736), this protein is Large ribosomal subunit protein uL2.